Consider the following 367-residue polypeptide: Heme A synthase (367 aa).

The next 5 helical transmembrane spans lie at 26 to 46 (IRGWLAAVLFALFALVLVGGA), 111 to 131 (LLARGIGVIFALPLFFFWVTG), 139 to 159 (LPLLGILALGGFQGFIGWWMV), 174 to 194 (LATHLTIACLIFAACMWIYRG), and 212 to 232 (AGAIAIMSLFQIYLGAIVAGL). H274 contributes to the heme binding site. The next 3 helical transmembrane spans lie at 276-296 (LGAYLLFALALWHMIASLRAA), 305-325 (SVLLFALVTVQAAIGITTLLL), and 327-347 (VPIGWGVLHQGGALVVLGFAI). H335 is a heme binding site.

This sequence belongs to the COX15/CtaA family. Type 2 subfamily. In terms of assembly, interacts with CtaB. Heme b is required as a cofactor.

It localises to the cell membrane. It carries out the reaction Fe(II)-heme o + 2 A + H2O = Fe(II)-heme a + 2 AH2. It participates in porphyrin-containing compound metabolism; heme A biosynthesis; heme A from heme O: step 1/1. Functionally, catalyzes the conversion of heme O to heme A by two successive hydroxylations of the methyl group at C8. The first hydroxylation forms heme I, the second hydroxylation results in an unstable dihydroxymethyl group, which spontaneously dehydrates, resulting in the formyl group of heme A. The chain is Heme A synthase from Rhizobium meliloti (strain 1021) (Ensifer meliloti).